The primary structure comprises 340 residues: Aspartate-semialdehyde dehydrogenase (340 aa).

NADP(+) is bound by residues 11 to 14 (TGEV) and 39 to 40 (RS). Phosphate is bound at residue Arg100. The active-site Acyl-thioester intermediate is Cys131. Gln158 is a binding site for substrate. 161-162 (SG) lines the NADP(+) pocket. Lys216 serves as a coordination point for phosphate. Arg238 serves as a coordination point for substrate. The active-site Proton acceptor is the His245. An NADP(+)-binding site is contributed by Asn318.

The protein belongs to the aspartate-semialdehyde dehydrogenase family. Homodimer.

It catalyses the reaction L-aspartate 4-semialdehyde + phosphate + NADP(+) = 4-phospho-L-aspartate + NADPH + H(+). It participates in amino-acid biosynthesis; L-lysine biosynthesis via DAP pathway; (S)-tetrahydrodipicolinate from L-aspartate: step 2/4. Its pathway is amino-acid biosynthesis; L-methionine biosynthesis via de novo pathway; L-homoserine from L-aspartate: step 2/3. The protein operates within amino-acid biosynthesis; L-threonine biosynthesis; L-threonine from L-aspartate: step 2/5. Catalyzes the NADPH-dependent formation of L-aspartate-semialdehyde (L-ASA) by the reductive dephosphorylation of L-aspartyl-4-phosphate. This is Aspartate-semialdehyde dehydrogenase from Aquifex aeolicus (strain VF5).